The following is a 144-amino-acid chain: Maximins 9/H3 (144 aa).

Positions 1–18 are cleaved as a signal peptide; the sequence is MNFKYIVAVSFLIASAYA. Residues 19–43 constitute a propeptide that is removed on maturation; the sequence is RSVKNDEQSLSQRDVLEEESLREIR. A Tyrosine amide modification is found at Y70. Residues 74-123 constitute a propeptide that is removed on maturation; sequence TAEEHEVMKRLEAIMRDLDSLDHPEEASERETRGFNQDEIANLFTKKEKR. An Isoleucine amide modification is found at I143.

Belongs to the bombinin family. As to expression, expressed by the skin glands.

Its subcellular location is the secreted. In terms of biological role, maximin-9 shows antimicrobial activity against bacteria and against the fungus C.albicans. It has little hemolytic activity. Maximin-H3 shows antibacterial activity against both Gram-positive and Gram-negative bacteria. It also shows antimicrobial activity against the fungus C.albicans. Shows strong hemolytic activity. In Bombina maxima (Giant fire-bellied toad), this protein is Maximins 9/H3.